Here is an 80-residue protein sequence, read N- to C-terminus: Metallothionein-like protein type 2 (80 aa).

This sequence belongs to the metallothionein superfamily. Type 15 family.

In terms of biological role, metallothioneins have a high content of cysteine residues that bind various heavy metals. This is Metallothionein-like protein type 2 from Brassica campestris (Field mustard).